The sequence spans 621 residues: Probable potassium transport system protein Kup 2 (621 aa).

Transmembrane regions (helical) follow at residues 12-32 (ITVA…LYAL), 52-72 (VLSL…VAII), 101-121 (WIIT…SMIT), 138-158 (PDLK…LFFI), 166-186 (VGKL…ILGL), 213-233 (GLAF…EALY), 249-269 (FGFV…LLLI), 286-306 (ALIP…QAVI), 338-358 (IYVP…VIGF), 370-390 (IAVT…MVLM), 396-416 (LLVA…FAAN), and 420-440 (IPEG…VLTT).

The protein belongs to the HAK/KUP transporter (TC 2.A.72) family.

It is found in the cell inner membrane. The catalysed reaction is K(+)(in) + H(+)(in) = K(+)(out) + H(+)(out). Functionally, transport of potassium into the cell. Likely operates as a K(+):H(+) symporter. This chain is Probable potassium transport system protein Kup 2, found in Dechloromonas aromatica (strain RCB).